The primary structure comprises 203 residues: Na(+)-translocating NADH-quinone reductase subunit E (203 aa).

A run of 6 helical transmembrane segments spans residues 12 to 32 (AVFV…FLAL), 36 to 56 (MEAA…TVPV), 82 to 102 (FLGL…LEMV), 115 to 135 (GVFL…LFMV), 145 to 165 (LVYG…LAGI), and 181 to 201 (LGIT…FSGI).

Belongs to the NqrDE/RnfAE family. As to quaternary structure, composed of six subunits; NqrA, NqrB, NqrC, NqrD, NqrE and NqrF.

Its subcellular location is the cell inner membrane. It carries out the reaction a ubiquinone + n Na(+)(in) + NADH + H(+) = a ubiquinol + n Na(+)(out) + NAD(+). In terms of biological role, NQR complex catalyzes the reduction of ubiquinone-1 to ubiquinol by two successive reactions, coupled with the transport of Na(+) ions from the cytoplasm to the periplasm. NqrA to NqrE are probably involved in the second step, the conversion of ubisemiquinone to ubiquinol. The chain is Na(+)-translocating NADH-quinone reductase subunit E from Hahella chejuensis (strain KCTC 2396).